Consider the following 356-residue polypeptide: Carminomycin 4-O-methyltransferase DnrK (356 aa).

S-adenosyl-L-methionine is bound at residue arginine 153. Aspartate 163 contacts substrate. Residues glycine 187, glutamate 210, 237-238 (DF), and serine 252 contribute to the S-adenosyl-L-methionine site. Residues asparagine 257 and arginine 303 each contribute to the substrate site.

Belongs to the class I-like SAM-binding methyltransferase superfamily. Cation-independent O-methyltransferase family. In terms of assembly, homodimer and homotetramer in equilibrium.

The enzyme catalyses carminomycin + S-adenosyl-L-methionine = daunorubicin + S-adenosyl-L-homocysteine + H(+). The protein operates within antibiotic biosynthesis; daunorubicin biosynthesis. It participates in antibiotic biosynthesis; carminomycin biosynthesis. In terms of biological role, involved in the biosynthesis of the anthracyclines carminomycin and daunorubicin (daunomycin) which are aromatic polyketide antibiotics that exhibit high cytotoxicity and are widely applied in the chemotherapy of a variety of cancers. In vivo, catalyzes the transfer of a methyl group from S-adenosyl-L-methionine to the 4-O-position of carminomycin to form daunorubicin. In vitro, it also methylates the anthracyclines rhodomycin D (10-carbomethoxy-13-deoxycarminomycin) and 13-deoxy-carminomycin at the 4-hydroxyl position. It is quite specific with respect to the length of the carbohydrate chain at the C7 position, but it can accept substrates with bulky substituent at C10 position. This Streptomyces peucetius protein is Carminomycin 4-O-methyltransferase DnrK (dnrK).